Consider the following 681-residue polypeptide: Sodium-dependent phosphate transporter 1 (681 aa).

The next 6 helical transmembrane spans lie at 25–45, 66–86, 106–126, 162–182, 207–227, and 234–254; these read YLWM…SVGA, ACIL…AKVS, LMAG…VASF, IVMS…ILFF, ACTV…LLGF, and GTIL…WFFV. Phosphoserine occurs at positions 269 and 273. The disordered stretch occupies residues 269–296; it reads SPSESPLMEKKNSLKEDHEETKLSVSDI. Over residues 275–290 the composition is skewed to basic and acidic residues; it reads LMEKKNSLKEDHEETK. Transmembrane regions (helical) follow at residues 515-535, 562-582, 604-624, and 654-674; these read VSLL…FAHG, VATP…GLWV, FSIE…GLPI, and IFMA…AIMA. Residues 554 to 562 form an a region; it reads DTGDVSSKV.

The protein belongs to the inorganic phosphate transporter (PiT) (TC 2.A.20) family.

The protein localises to the cell membrane. It carries out the reaction 2 Na(+)(out) + phosphate(out) = 2 Na(+)(in) + phosphate(in). Its function is as follows. Sodium-phosphate symporter which preferentially transports the monovalent form of phosphate with a stoichiometry of two sodium ions per phosphate ion. May play a role in extracellular matrix and cartilage calcification as well as in vascular calcification. Essential for cell proliferation but this function is independent of its phosphate transporter activity. In Felis catus (Cat), this protein is Sodium-dependent phosphate transporter 1 (Slc20a1).